Reading from the N-terminus, the 291-residue chain is tRNA (guanine-N(1)-)-methyltransferase (291 aa).

S-adenosyl-L-methionine contacts are provided by residues Gly160 and 184-189 (IGDYVL).

The protein belongs to the RNA methyltransferase TrmD family. Homodimer.

Its subcellular location is the cytoplasm. The catalysed reaction is guanosine(37) in tRNA + S-adenosyl-L-methionine = N(1)-methylguanosine(37) in tRNA + S-adenosyl-L-homocysteine + H(+). Specifically methylates guanosine-37 in various tRNAs. This chain is tRNA (guanine-N(1)-)-methyltransferase, found in Corynebacterium efficiens (strain DSM 44549 / YS-314 / AJ 12310 / JCM 11189 / NBRC 100395).